Consider the following 340-residue polypeptide: GTP 3',8-cyclase (340 aa).

The Radical SAM core domain occupies 8–227 (KLGRPIRDLR…TMIEQHFEID (220 aa)). Residue Arg17 participates in GTP binding. [4Fe-4S] cluster contacts are provided by Cys24 and Cys28. Tyr30 lines the S-adenosyl-L-methionine pocket. Residue Cys31 participates in [4Fe-4S] cluster binding. Arg71 serves as a coordination point for GTP. Gly75 lines the S-adenosyl-L-methionine pocket. Thr102 is a GTP binding site. Ser126 contacts S-adenosyl-L-methionine. Lys163 lines the GTP pocket. Met197 is a binding site for S-adenosyl-L-methionine. 2 residues coordinate [4Fe-4S] cluster: Cys261 and Cys264. 266-268 (RAR) contributes to the GTP binding site. Position 278 (Cys278) interacts with [4Fe-4S] cluster.

It belongs to the radical SAM superfamily. MoaA family. In terms of assembly, monomer and homodimer. It depends on [4Fe-4S] cluster as a cofactor.

It catalyses the reaction GTP + AH2 + S-adenosyl-L-methionine = (8S)-3',8-cyclo-7,8-dihydroguanosine 5'-triphosphate + 5'-deoxyadenosine + L-methionine + A + H(+). Its pathway is cofactor biosynthesis; molybdopterin biosynthesis. Its function is as follows. Catalyzes the cyclization of GTP to (8S)-3',8-cyclo-7,8-dihydroguanosine 5'-triphosphate. This is GTP 3',8-cyclase from Staphylococcus aureus (strain MRSA252).